The primary structure comprises 461 residues: Cysteine--tRNA ligase (461 aa).

Cys28 contributes to the Zn(2+) binding site. Residues 30-40 (ITVYDLCHIGH) carry the 'HIGH' region motif. Residues Cys209, His234, and Glu238 each coordinate Zn(2+). Residues 266–270 (KMSKS) carry the 'KMSKS' region motif. An ATP-binding site is contributed by Lys269.

This sequence belongs to the class-I aminoacyl-tRNA synthetase family. Monomer. Zn(2+) serves as cofactor.

The protein resides in the cytoplasm. The catalysed reaction is tRNA(Cys) + L-cysteine + ATP = L-cysteinyl-tRNA(Cys) + AMP + diphosphate. This Escherichia coli (strain SMS-3-5 / SECEC) protein is Cysteine--tRNA ligase.